We begin with the raw amino-acid sequence, 368 residues long: MALHRLKGHGANVGNRVGIQLDKDFVLFQGSEQEALAVYLSGILSLRLKETTTIKYIRLHLRGVRRVSSDTQSSLPARTGRKRFCSENEFYSRTWNFFDGYREAPMTVPAGEYKYPFDVVMEGSLPASVEGMKEASISYLFTVEIGRRHGRDITFDKPLRVIRVPDLEPCSHDFALDEVWANKIAYRIGIQNRTVALGTRIDVDYVFAPLLRDMKIAFIESQLLEVRDLSVEPNDGGSAHAARTETIVCSDRYTLGEEYSSKALESYQFSRTLQLPQALGHCVQDTEDMGVRVSHKLKIHVRMHNPDGHESELRLAIPVLIYLSPYYRVWEDSFCGETIPLPETLNPSDECPPAYGMHELDQLYMPQD.

It belongs to the arrestin family. As to quaternary structure, interacts with hulA.

In terms of biological role, may be involved in signaling by recognizing appropriately phosphorylated substrates via its arrestin domains and then recruit a HECT-type ubiquitin ligase such as hulA, leading to ubiquitination of the substrate, providing a link between ubiquitination and phosphorylation in protein regulation and stability. This chain is HECT-type ubiquitin ligase-interacting protein apyA (apyA), found in Emericella nidulans (strain FGSC A4 / ATCC 38163 / CBS 112.46 / NRRL 194 / M139) (Aspergillus nidulans).